A 113-amino-acid polypeptide reads, in one-letter code: Immunoglobulin lambda variable 2-23 (113 aa).

Positions Met1–Ala19 are cleaved as a signal peptide. A Pyrrolidone carboxylic acid modification is found at Gln20. Residues Gln20–Thr44 are framework-1. One can recognise an Ig-like domain in the interval Gln20 to Ala113. Cys41 and Cys109 are joined by a disulfide. Residues Ser45–Leu53 are complementarity-determining-1. The framework-2 stretch occupies residues Val54–Tyr70. The tract at residues Glu71–Ser73 is complementarity-determining-2. The interval Ser73–Ala92 is disordered. The interval Lys74–Cys109 is framework-3. Residues Gly78–Ala92 are compositionally biased toward polar residues. Residues Cys110–Ala113 are complementarity-determining-3.

Immunoglobulins are composed of two identical heavy chains and two identical light chains; disulfide-linked.

Its subcellular location is the secreted. It localises to the cell membrane. Its function is as follows. V region of the variable domain of immunoglobulin light chains that participates in the antigen recognition. Immunoglobulins, also known as antibodies, are membrane-bound or secreted glycoproteins produced by B lymphocytes. In the recognition phase of humoral immunity, the membrane-bound immunoglobulins serve as receptors which, upon binding of a specific antigen, trigger the clonal expansion and differentiation of B lymphocytes into immunoglobulins-secreting plasma cells. Secreted immunoglobulins mediate the effector phase of humoral immunity, which results in the elimination of bound antigens. The antigen binding site is formed by the variable domain of one heavy chain, together with that of its associated light chain. Thus, each immunoglobulin has two antigen binding sites with remarkable affinity for a particular antigen. The variable domains are assembled by a process called V-(D)-J rearrangement and can then be subjected to somatic hypermutations which, after exposure to antigen and selection, allow affinity maturation for a particular antigen. This is Immunoglobulin lambda variable 2-23 from Homo sapiens (Human).